Reading from the N-terminus, the 178-residue chain is Transcription termination/antitermination protein NusG (178 aa).

The region spanning 130-159 is the KOW domain; the sequence is SVKVKEGPFANFIGTIEEIQLDKRKLKVHV.

Belongs to the NusG family.

Its function is as follows. Participates in transcription elongation, termination and antitermination. The polypeptide is Transcription termination/antitermination protein NusG (Halalkalibacterium halodurans (strain ATCC BAA-125 / DSM 18197 / FERM 7344 / JCM 9153 / C-125) (Bacillus halodurans)).